The primary structure comprises 142 residues: Large ribosomal subunit protein uL13 (142 aa).

The protein belongs to the universal ribosomal protein uL13 family. As to quaternary structure, part of the 50S ribosomal subunit.

Functionally, this protein is one of the early assembly proteins of the 50S ribosomal subunit, although it is not seen to bind rRNA by itself. It is important during the early stages of 50S assembly. In Pyrococcus furiosus (strain ATCC 43587 / DSM 3638 / JCM 8422 / Vc1), this protein is Large ribosomal subunit protein uL13.